The following is a 256-amino-acid chain: Trypsin, alkaline C (256 aa).

An N-terminal signal peptide occupies residues 1 to 17 (MRLFLALLALGFAAVAA). Residues 18–24 (VPANPQR) constitute a propeptide, activation peptide. Positions 25 to 256 (IVGGSTTTIQ…RYTSWISNNS (232 aa)) constitute a Peptidase S1 domain. Cysteines 55 and 71 form a disulfide. Active-site charge relay system residues include His70 and Asp115. 2 disulfides stabilise this stretch: Cys180–Cys197 and Cys209–Cys233. Ser213 (charge relay system) is an active-site residue.

Belongs to the peptidase S1 family. Midgut.

It localises to the secreted. It is found in the extracellular space. It catalyses the reaction Preferential cleavage: Arg-|-Xaa, Lys-|-Xaa.. In Manduca sexta (Tobacco hawkmoth), this protein is Trypsin, alkaline C.